We begin with the raw amino-acid sequence, 107 residues long: Nucleoid-associated protein XF_1808 (107 aa).

This sequence belongs to the YbaB/EbfC family. Homodimer.

The protein localises to the cytoplasm. It localises to the nucleoid. In terms of biological role, binds to DNA and alters its conformation. May be involved in regulation of gene expression, nucleoid organization and DNA protection. In Xylella fastidiosa (strain 9a5c), this protein is Nucleoid-associated protein XF_1808.